A 447-amino-acid chain; its full sequence is Tubulin beta-4 chain (447 aa).

8 residues coordinate GTP: Q11, E69, S138, G142, T143, G144, N204, and N226. E69 is a binding site for Mg(2+). The interval 423 to 447 is disordered; the sequence is QQYQDATADEEGEYEDEEQQEADDM. A compositionally biased stretch (acidic residues) spans 429–447; it reads TADEEGEYEDEEQQEADDM.

The protein belongs to the tubulin family. In terms of assembly, dimer of alpha and beta chains. A typical microtubule is a hollow water-filled tube with an outer diameter of 25 nm and an inner diameter of 15 nM. Alpha-beta heterodimers associate head-to-tail to form protofilaments running lengthwise along the microtubule wall with the beta-tubulin subunit facing the microtubule plus end conferring a structural polarity. Microtubules usually have 13 protofilaments but different protofilament numbers can be found in some organisms and specialized cells. Requires Mg(2+) as cofactor. As to expression, expressed in roots and leaf sheaths.

The protein localises to the cytoplasm. The protein resides in the cytoskeleton. In terms of biological role, tubulin is the major constituent of microtubules, a cylinder consisting of laterally associated linear protofilaments composed of alpha- and beta-tubulin heterodimers. Microtubules grow by the addition of GTP-tubulin dimers to the microtubule end, where a stabilizing cap forms. Below the cap, tubulin dimers are in GDP-bound state, owing to GTPase activity of alpha-tubulin. The polypeptide is Tubulin beta-4 chain (TUBB4) (Oryza sativa subsp. japonica (Rice)).